The sequence spans 776 residues: Cilium assembly protein DZIP1L (776 aa).

The C2H2-type zinc finger occupies 166–189; the sequence is HTCHLCDKTFMNATFLRGHIQRRH. Positions 196 to 450 form a coiled coil; it reads GKQKQEQQLG…RKVLAALRNN (255 aa). Residues S425 and S426 each carry the phosphoserine modification. A disordered region spans residues 520-776; the sequence is SRAKKRWEGT…SGSRPRIPGW (257 aa). Residues 600-618 are compositionally biased toward low complexity; sequence GPSSTPVSPGPGLSTPPFS. The segment covering 652-683 has biased composition (polar residues); it reads WSDSETSEESAQSPGKGSDGLASSATLVQSMV. Over residues 685-694 the composition is skewed to basic and acidic residues; sequence NLEKQLETPA. Polar residues predominate over residues 709-721; it reads TALQRSSTPARKT.

This sequence belongs to the DZIP C2H2-type zinc-finger protein family. Interacts with SEPTIN2.

The protein localises to the cytoplasm. Its subcellular location is the cytoskeleton. It is found in the cilium basal body. It localises to the microtubule organizing center. The protein resides in the centrosome. The protein localises to the centriole. Its function is as follows. Involved in primary cilium formation. Probably acts as a transition zone protein required for localization of PKD1/PC1 and PKD2/PC2 to the ciliary membrane. The sequence is that of Cilium assembly protein DZIP1L from Rattus norvegicus (Rat).